The primary structure comprises 476 residues: Elongation factor Tu, chloroplastic (476 aa).

The N-terminal 67 residues, 1-67, are a transit peptide targeting the chloroplast; the sequence is MAISAPAACS…QSTRRSFTVR (67 aa). The tr-type G domain maps to 77-281; that stretch reads KPHVNIGTIG…AVDDYIPIPQ (205 aa). Positions 86–93 are G1; the sequence is GHVDHGKT. 86-93 provides a ligand contact to GTP; sequence GHVDHGKT. Residue T94 is modified to Phosphothreonine. The tract at residues 127–131 is G2; that stretch reads GITIN. The tract at residues 148 to 151 is G3; it reads DCPG. GTP contacts are provided by residues 148 to 152 and 203 to 206; these read DCPGH and NKED. Residues 203–206 are G4; the sequence is NKED. Residues 241–243 are G5; the sequence is SAL.

It belongs to the TRAFAC class translation factor GTPase superfamily. Classic translation factor GTPase family. EF-Tu/EF-1A subfamily. Interacts with PI5K2. Interacts with APD2.

The protein resides in the plastid. The protein localises to the chloroplast. Its function is as follows. This protein promotes the GTP-dependent binding of aminoacyl-tRNA to the A-site of ribosomes during protein biosynthesis. The chain is Elongation factor Tu, chloroplastic (TUFA) from Arabidopsis thaliana (Mouse-ear cress).